The following is a 248-amino-acid chain: UPF0328 protein ECU06_0030/ECU06_1690/ECU11_0020 (248 aa).

Disordered stretches follow at residues 1 to 34 and 51 to 81; these read MVRH…HPSR and ASAE…ILPD. Composition is skewed to polar residues over residues 10–19 and 61–76; these read PKTTNPNPES and QNLS…THQS.

This sequence belongs to the UPF0328 family.

The protein is UPF0328 protein ECU06_0030/ECU06_1690/ECU11_0020 of Encephalitozoon cuniculi (strain GB-M1) (Microsporidian parasite).